Consider the following 624-residue polypeptide: Phosphatidylinositol 4-kinase lsb6 (624 aa).

Residues 1-31 (MESTFHSDTLDSFPNYQENSLNTNEEQTNPL) show a composition bias toward polar residues. A disordered region spans residues 1–53 (MESTFHSDTLDSFPNYQENSLNTNEEQTNPLESLRDGWASSNSSSSSSLLLPD). Residues 40-51 (SSNSSSSSSLLL) show a composition bias toward low complexity. Positions 145-520 (GVFPVLISKG…LLELPNLYVV (376 aa)) constitute a PI3K/PI4K catalytic domain. The tract at residues 151–157 (ISKGSSG) is G-loop. The segment at 346–354 (RNTDRNLDN) is catalytic loop. The interval 409-429 (AIDNSLAFPYKHPDSWRSFPY) is activation loop.

Belongs to the PI3/PI4-kinase family. Mg(2+) serves as cofactor. The cofactor is Mn(2+).

The protein resides in the cell membrane. The protein localises to the vacuole membrane. It localises to the golgi apparatus membrane. The enzyme catalyses a 1,2-diacyl-sn-glycero-3-phospho-(1D-myo-inositol) + ATP = a 1,2-diacyl-sn-glycero-3-phospho-(1D-myo-inositol 4-phosphate) + ADP + H(+). In terms of biological role, may play a role in endocytic and/or exocytic pathways. The chain is Phosphatidylinositol 4-kinase lsb6 (lsb6) from Schizosaccharomyces pombe (strain 972 / ATCC 24843) (Fission yeast).